The following is a 598-amino-acid chain: NADH-ubiquinone oxidoreductase chain 5 (598 aa).

16 helical membrane passes run 1–21, 28–48, 81–101, 115–135, 171–191, 193–213, 233–253, 265–285, 293–312, 323–343, 362–382, 399–421, 454–474, 480–500, 509–529, and 576–596; these read MLELWGVLSLTSLGVMVIFLF, FAESVKYAGYMNAVLLSILLM, CFFVVGLYVTWNILMFSFYYM, GLFLIAMLLLVSAESLFQLLI, GDIGLLIMLMWSLVTLGDWSF, GLYALDFVNTFFLLGVVLAAA, TPVSSLLHSSTMVVAGVFLLI, IQLMVFFLGTMTTLFSAICAL, VVAFSTASQLGLMVTAVGAG, MHAFFKAMLFMCSGSFIHGLQ, SVCFFIGSAALMGVPFLAGFF, WAVGLVLIATSFTAAYSVRLLYF, VIAGVVFIYFLSPNQISCLSL, LAAVFVTLVGGLIAWDVVNLL, IPELAFEAQVGFYPLIMHKLI, and LIKMYIAVMVMMGGLILGIMI.

Belongs to the complex I subunit 5 family.

The protein localises to the mitochondrion inner membrane. It catalyses the reaction a ubiquinone + NADH + 5 H(+)(in) = a ubiquinol + NAD(+) + 4 H(+)(out). Core subunit of the mitochondrial membrane respiratory chain NADH dehydrogenase (Complex I) that is believed to belong to the minimal assembly required for catalysis. Complex I functions in the transfer of electrons from NADH to the respiratory chain. The immediate electron acceptor for the enzyme is believed to be ubiquinone. The sequence is that of NADH-ubiquinone oxidoreductase chain 5 (ND5) from Branchiostoma lanceolatum (Common lancelet).